Here is a 394-residue protein sequence, read N- to C-terminus: MSFQPTPEDKFTFGLWTVGWQGRDPFGDATRPGLDPVETVQRLAELGAYGVTFHDDDLNPFGSSDTERESHIKRFRQALDATGMTVPMATTNLFTHPVFKDRFTANDRDVRAYAVRKTIRNIDLAAELGAKTYVAWGGREGAESGGAKDVRDALDRMKEAFDLLGEYVTAQGYDLRFAIEPKPNEPRGDILLPTVGHALAFIERLERPELYGVNPEVGHEQMAGLNFPHGIAQALWAGKLFHIDLNGQSGIKYDQDCGSRRRPAGGVLVVDLLESAGYEGPRHFDFKPPRTEDFDGVWASAEGCMRNYLILKQPRPPSAPTRRCRRRASAPRVWTSWPSRPLADGLEALLADRTAFEDFDVEAAAARGMVRTPRPAGDGPPAGRARLTVAPRKR.

Residues H54 and D57 contribute to the active site. E180, E216, H219, D244, D254, D256, and D285 together coordinate Mg(2+). A disordered region spans residues 370–394 (VRTPRPAGDGPPAGRARLTVAPRKR). The span at 373 to 386 (PRPAGDGPPAGRAR) shows a compositional bias: low complexity.

This sequence belongs to the xylose isomerase family. Homotetramer. The cofactor is Mg(2+).

The protein localises to the cytoplasm. It carries out the reaction alpha-D-xylose = alpha-D-xylulofuranose. Functionally, involved in D-xylose catabolism. The protein is Xylose isomerase (xylA) of Streptomyces rochei (Streptomyces parvullus).